A 179-amino-acid polypeptide reads, in one-letter code: Large ribosomal subunit protein uL5 (179 aa).

Belongs to the universal ribosomal protein uL5 family. As to quaternary structure, part of the 50S ribosomal subunit; part of the 5S rRNA/L5/L18/L25 subcomplex. Contacts the 5S rRNA and the P site tRNA. Forms a bridge to the 30S subunit in the 70S ribosome.

Its function is as follows. This is one of the proteins that bind and probably mediate the attachment of the 5S RNA into the large ribosomal subunit, where it forms part of the central protuberance. In the 70S ribosome it contacts protein S13 of the 30S subunit (bridge B1b), connecting the 2 subunits; this bridge is implicated in subunit movement. Contacts the P site tRNA; the 5S rRNA and some of its associated proteins might help stabilize positioning of ribosome-bound tRNAs. The polypeptide is Large ribosomal subunit protein uL5 (Haemophilus ducreyi (strain 35000HP / ATCC 700724)).